The following is a 464-amino-acid chain: tRNA-2-methylthio-N(6)-dimethylallyladenosine synthase (464 aa).

In terms of domain architecture, MTTase N-terminal spans 19–135 (GSYWITTFGC…LENLLERVDL (117 aa)). Residues C28, C64, C98, C170, C174, and C177 each coordinate [4Fe-4S] cluster. A Radical SAM core domain is found at 156-393 (RDSSICGWVN…NELVETTSRK (238 aa)). The TRAM domain maps to 396-464 (QRYLNNIESV…SFSLSGQIYK (69 aa)).

Belongs to the methylthiotransferase family. MiaB subfamily. In terms of assembly, monomer. [4Fe-4S] cluster serves as cofactor.

Its subcellular location is the cytoplasm. The enzyme catalyses N(6)-dimethylallyladenosine(37) in tRNA + (sulfur carrier)-SH + AH2 + 2 S-adenosyl-L-methionine = 2-methylsulfanyl-N(6)-dimethylallyladenosine(37) in tRNA + (sulfur carrier)-H + 5'-deoxyadenosine + L-methionine + A + S-adenosyl-L-homocysteine + 2 H(+). Functionally, catalyzes the methylthiolation of N6-(dimethylallyl)adenosine (i(6)A), leading to the formation of 2-methylthio-N6-(dimethylallyl)adenosine (ms(2)i(6)A) at position 37 in tRNAs that read codons beginning with uridine. This is tRNA-2-methylthio-N(6)-dimethylallyladenosine synthase from Prochlorococcus marinus subsp. pastoris (strain CCMP1986 / NIES-2087 / MED4).